Consider the following 704-residue polypeptide: Tetratricopeptide repeat protein 12 (704 aa).

Threonine 71 is modified (phosphothreonine). 3 TPR repeats span residues 105–138, 139–172, and 173–206; these read ADAL…LKDM, KVLY…DENC, and TKAY…NPKL.

The protein resides in the cytoplasm. Cytoplasmic protein that plays a role in the proper assembly of dynein arm complexes in motile cilia in both respiratory cells and sperm flagella. The chain is Tetratricopeptide repeat protein 12 (Ttc12) from Mus musculus (Mouse).